We begin with the raw amino-acid sequence, 477 residues long: MKVTLPEFERAGVMVVGDVMLDRYWYGPSSRISPEAPVPVVKVNTIEERPGGAANVAMNIASLGANARLVGLTGIDDAARALSKSLADVNVKCDFVSVPTHPTITKLRVLSRNQQLIRLDFEEGFEGVDPQPLHERINQALSSIGALVLSDYAKGALASVQQMIQLARKAGVPVLIDPKGTDFERYRGATLLTPNLSEFEAVVGKCKTEEEIVERGMKLIADYELSALLVTRSEQGMSLLQPGKAPLHMPTQAQEVYDVTGAGDTVIGVLAATLAAGNSLEEACFFANAAAGVVVGKLGTSTVSPIELENAVRGRADTGFGVMTEEELKLAVAAARKRGEKVVMTNGVFDILHAGHVSYLANARKQGDRLIVAVNSDASTKRLKGDSRPVNPLEQRMIVLGALEAVDWVVSFEEDTPQRLIAGILPDLLVKGGDYKPEEIAGSKEVWANGGEVLVLNFEDGCSTTNIIKKIQQDKKG.

A ribokinase region spans residues 1 to 318; that stretch reads MKVTLPEFER…ENAVRGRADT (318 aa). N6-acetyllysine is present on Lys179. 195-198 contacts ATP; sequence NLSE. Residue Asp264 is part of the active site. The tract at residues 344-477 is cytidylyltransferase; it reads MTNGVFDILH…IKKIQQDKKG (134 aa).

The protein in the N-terminal section; belongs to the carbohydrate kinase PfkB family. This sequence in the C-terminal section; belongs to the cytidylyltransferase family. As to quaternary structure, homodimer.

It carries out the reaction D-glycero-beta-D-manno-heptose 7-phosphate + ATP = D-glycero-beta-D-manno-heptose 1,7-bisphosphate + ADP + H(+). The catalysed reaction is D-glycero-beta-D-manno-heptose 1-phosphate + ATP + H(+) = ADP-D-glycero-beta-D-manno-heptose + diphosphate. It functions in the pathway nucleotide-sugar biosynthesis; ADP-L-glycero-beta-D-manno-heptose biosynthesis; ADP-L-glycero-beta-D-manno-heptose from D-glycero-beta-D-manno-heptose 7-phosphate: step 1/4. Its pathway is nucleotide-sugar biosynthesis; ADP-L-glycero-beta-D-manno-heptose biosynthesis; ADP-L-glycero-beta-D-manno-heptose from D-glycero-beta-D-manno-heptose 7-phosphate: step 3/4. Its function is as follows. Catalyzes the phosphorylation of D-glycero-D-manno-heptose 7-phosphate at the C-1 position to selectively form D-glycero-beta-D-manno-heptose-1,7-bisphosphate. In terms of biological role, catalyzes the ADP transfer from ATP to D-glycero-beta-D-manno-heptose 1-phosphate, yielding ADP-D-glycero-beta-D-manno-heptose. In Shigella sonnei (strain Ss046), this protein is Bifunctional protein HldE.